The following is a 610-amino-acid chain: Protein arginine N-methyltransferase 5 (610 aa).

The region spanning Leu-284–Trp-587 is the SAM-dependent MTase PRMT-type domain. Residue Tyr-300 participates in S-adenosyl-L-methionine binding. Position 303 (Phe-303) interacts with a protein. Residues Lys-309–Tyr-310, Glu-368, and Asp-396–Met-397 each bind S-adenosyl-L-methionine. The a protein site is built by Glu-412 and Glu-421. Catalysis depends on proton donor/acceptor residues Glu-412 and Glu-421. An interaction with vls region spans residues Ala-470–Leu-610.

It belongs to the class I-like SAM-binding methyltransferase superfamily. Protein arginine N-methyltransferase family. As to quaternary structure, interacts with vls. Expressed only in ovaries.

The protein resides in the cytoplasm. Functionally, arginine methyltransferase that can both catalyze the formation of omega-N monomethylarginine (MMA) and symmetrical dimethylarginine (sDMA). Specifically mediates the symmetrical dimethylation of arginine residues in the small nuclear ribonucleoproteins SmD1 and SmD3. Required for arginine symmetrical dimethylation of piwi family proteins, piwi, aub and AGO3, during germline development. Required during oogenesis for pole cell formation in the pathway controlled by oskar (osk) and for abdominal segments during early embryogenesis. Involved in nanos (nos) and germ cell mRNAs localization. The sequence is that of Protein arginine N-methyltransferase 5 from Drosophila melanogaster (Fruit fly).